A 376-amino-acid chain; its full sequence is Beta-centractin (376 aa).

N-acetylmethionine is present on methionine 1. Tyrosine 4 is modified (3'-nitrotyrosine).

The protein belongs to the actin family. ARP1 subfamily.

Its subcellular location is the cytoplasm. The protein resides in the cytoskeleton. The protein localises to the microtubule organizing center. It localises to the centrosome. Component of a multi-subunit complex involved in microtubule based vesicle motility. It is associated with the centrosome. This chain is Beta-centractin (ACTR1B), found in Homo sapiens (Human).